We begin with the raw amino-acid sequence, 179 residues long: Large ribosomal subunit protein uL5 (179 aa).

Lys3 carries the N6-acetyllysine modification.

It belongs to the universal ribosomal protein uL5 family. In terms of assembly, part of the 50S ribosomal subunit; part of the 5S rRNA/L5/L18/L25 subcomplex. Contacts the 5S rRNA and the P site tRNA. Forms a bridge to the 30S subunit in the 70S ribosome.

This is one of the proteins that bind and probably mediate the attachment of the 5S RNA into the large ribosomal subunit, where it forms part of the central protuberance. In the 70S ribosome it contacts protein S13 of the 30S subunit (bridge B1b), connecting the 2 subunits; this bridge is implicated in subunit movement. Contacts the P site tRNA; the 5S rRNA and some of its associated proteins might help stabilize positioning of ribosome-bound tRNAs. The polypeptide is Large ribosomal subunit protein uL5 (Escherichia coli O45:K1 (strain S88 / ExPEC)).